Reading from the N-terminus, the 410-residue chain is MSGFCVLAKYGEIAVKGRNQGWFENCLVRNLRHAVGGPVLIRRRGGFLVASAHHRDPAELTRRLQEVMGLNVVQPALSVPPTVEDATAAAVDLLRRRHAERPGAPVPTFAVRARRRWKDFPMSSDAFAAHIGARVCAELGWRVDLAAPEVPVLVEVDRREIFVSVERLPGQGGLPVGCSGRALVLLSGGYDSPVAAYRAMRRGLHCDFVHFTGAPYTDPSSMYKAYALARELGRYQTPARLYVVPVGNAQKTLATAGAEELQIVARRRLYLRIAEELARRRQRDALVTGDSLGQVASQTLSNLVSADQACTLPVLRPLIGWDKQEIITEARRIGTAEISVLRDEDCCSLLAPSEVATRTNPADLRVIEQRADIDTLVEQALEHVTVLTPGRVRGAEPPRAKVARPTVVAG.

The THUMP domain occupies 58-167 (AELTRRLQEV…RREIFVSVER (110 aa)). Residues 185 to 186 (LL), 210 to 211 (HF), arginine 267, glycine 289, and glutamine 298 each bind ATP.

The protein belongs to the ThiI family.

The protein localises to the cytoplasm. It carries out the reaction [ThiI sulfur-carrier protein]-S-sulfanyl-L-cysteine + a uridine in tRNA + 2 reduced [2Fe-2S]-[ferredoxin] + ATP + H(+) = [ThiI sulfur-carrier protein]-L-cysteine + a 4-thiouridine in tRNA + 2 oxidized [2Fe-2S]-[ferredoxin] + AMP + diphosphate. The catalysed reaction is [ThiS sulfur-carrier protein]-C-terminal Gly-Gly-AMP + S-sulfanyl-L-cysteinyl-[cysteine desulfurase] + AH2 = [ThiS sulfur-carrier protein]-C-terminal-Gly-aminoethanethioate + L-cysteinyl-[cysteine desulfurase] + A + AMP + 2 H(+). The protein operates within cofactor biosynthesis; thiamine diphosphate biosynthesis. Functionally, catalyzes the ATP-dependent transfer of a sulfur to tRNA to produce 4-thiouridine in position 8 of tRNAs, which functions as a near-UV photosensor. Also catalyzes the transfer of sulfur to the sulfur carrier protein ThiS, forming ThiS-thiocarboxylate. This is a step in the synthesis of thiazole, in the thiamine biosynthesis pathway. The sulfur is donated as persulfide by IscS. The chain is Probable tRNA sulfurtransferase from Nocardia farcinica (strain IFM 10152).